Consider the following 879-residue polypeptide: Prostaglandin F2 receptor negative regulator (879 aa).

A signal peptide spans 1–21 (MGRPAPRPLLLALLSLAVCRG). 2 consecutive Ig-like C2-type domains span residues 22-137 (RVVR…DTVQ) and 149-263 (PSSR…QEIQ). The Extracellular portion of the chain corresponds to 22-832 (RVVRVPAGTL…MDVLNAFKYP (811 aa)). 2 disulfide bridges follow: Cys-43-Cys-119 and Cys-169-Cys-247. An N-linked (GlcNAc...) asparagine glycan is attached at Asn-44. The Cell attachment site signature appears at 89–91 (RGD). The residue at position 271 (Thr-271) is a Phosphothreonine. 4 Ig-like C2-type domains span residues 276 to 389 (PTAL…WHKV), 406 to 536 (PEYQ…DVFS), 544 to 662 (ASED…AWSP), and 688 to 813 (PTFN…AEIH). Cys-299 and Cys-373 are oxidised to a cystine. Asn-300, Asn-383, and Asn-413 each carry an N-linked (GlcNAc...) asparagine glycan. An Endoplasmic reticulum retention signal motif is present at residues 424–427 (PTEL). Cys-429 and Cys-515 form a disulfide bridge. N-linked (GlcNAc...) asparagine glycans are attached at residues Asn-525, Asn-600, Asn-618, and Asn-691. A disulfide bridge connects residues Cys-571 and Cys-655. The Cell attachment site signature appears at 703–705 (RGD). A disulfide bridge connects residues Cys-711 and Cys-793. The helical transmembrane segment at 833–853 (LLIGVGLSTVIGLLSCLIGYC) threads the bilayer. Residues 854 to 879 (SSHWCCKKEVRETRRERRRLMSMEMD) lie on the Cytoplasmic side of the membrane.

As to quaternary structure, interacts with CD9 and CD81. Part of a complex composed of CD9, CD81 and IGSF8. Also seems to interact with CD63, CD82 and CD151. In terms of tissue distribution, expressed in myoblasts (at protein level).

Its subcellular location is the endoplasmic reticulum membrane. It is found in the golgi apparatus. The protein resides in the trans-Golgi network membrane. Functionally, inhibits the binding of prostaglandin F2-alpha (PGF2-alpha) to its specific FP receptor, by decreasing the receptor number rather than the affinity constant. Functional coupling with the prostaglandin F2-alpha receptor seems to occur. In myoblasts, associates with tetraspanins CD9 and CD81 to prevent myotube fusion during muscle regeneration. This chain is Prostaglandin F2 receptor negative regulator (Ptgfrn), found in Mus musculus (Mouse).